The chain runs to 244 residues: Probable transcriptional regulatory protein CHY_1525 (244 aa).

The protein belongs to the TACO1 family.

It localises to the cytoplasm. The chain is Probable transcriptional regulatory protein CHY_1525 from Carboxydothermus hydrogenoformans (strain ATCC BAA-161 / DSM 6008 / Z-2901).